Here is a 472-residue protein sequence, read N- to C-terminus: Cannabinoid receptor 1 (472 aa).

Residues 1–116 are Extracellular-facing; sequence MKSILDGLAD…CFMVLNPSQQ (116 aa). Positions 2–23 are required for mitochondrial localization; sequence KSILDGLADTTFRTITTDLLYV. 2 N-linked (GlcNAc...) asparagine glycosylation sites follow: Asn77 and Asn83. Residues 117 to 142 form a helical membrane-spanning segment; it reads LAIAVLSLTLGTFTVLENLLVLCVIL. The Cytoplasmic segment spans residues 143-154; it reads HSRSLRCRPSYH. A helical transmembrane segment spans residues 155-175; sequence FIGSLAVADLLGSVIFVYSFI. Topologically, residues 176–187 are extracellular; sequence DFHVFHRKDSRN. Residues 188–212 traverse the membrane as a helical segment; that stretch reads VFLFKLGGVTASFTASVGSLFLTAI. At 213 to 232 the chain is on the cytoplasmic side; that stretch reads DRYISIHRPLAYKRIVTRPK. The chain crosses the membrane as a helical span at residues 233-255; it reads AVVAFCLMWTIAIVIAVLPLLGW. At 256–273 the chain is on the extracellular side; the sequence is NCEKLQSVCSDIFPHIDE. The helical transmembrane segment at 274–299 threads the bilayer; it reads TYLMFWIGVTSVLLLFIVYAYMYILW. Topologically, residues 300-344 are cytoplasmic; that stretch reads KAHSHAVRMIQRGTQKSIIIHTSEDGKVQVTRPDQARMDIRLAKT. The helical transmembrane segment at 345-365 threads the bilayer; sequence LVLILVVLIICWGPLLAIMVY. Residues 366-377 lie on the Extracellular side of the membrane; the sequence is DVFGKMNKLIKT. Residues 378–399 form a helical membrane-spanning segment; sequence VFAFCSMLCLLNSTVNPIIYAL. At 400-472 the chain is on the cytoplasmic side; it reads RSKDLRHAFR…VSTDTSAEAL (73 aa). Residue Cys415 is the site of S-palmitoyl cysteine attachment. Ser425 and Ser429 each carry phosphoserine.

Belongs to the G-protein coupled receptor 1 family. In terms of assembly, interacts (via C-terminus) with CNRIP1; this interaction attenuates constitutive, but not agonist-dependent, inhibition of voltage-gated Ca(2+) channels in neurons. Associates with G protein alpha subunits, including G(i) alpha-1/GNAI1, G(i) alpha-3/GNAI3 and G(o)-alpha/GNAO1; palmitoylation is important for interaction with GNAI3 and GNAO1. Post-translationally, palmitoylation at Cys-415 is important for recruitment at plasma membrane and lipid rafts and association with G protein alpha subunits. Widely expressed, with highest levels in fetal and adult brain. Expression levels of isoform 2 and isoform 3 are much lower than those of isoform 1.

Its subcellular location is the cell membrane. It localises to the membrane raft. The protein resides in the mitochondrion outer membrane. The protein localises to the cell projection. It is found in the axon. Its subcellular location is the presynapse. With respect to regulation, hemopressin, a peptide derived from hemoglobin subunit alpha (HBA1 and/or HBA2), acts as an antagonist peptide: hemopressin-binding efficiently blocks cannabinoid receptor CNR1 and subsequent signaling. G-protein coupled receptor for endogenous cannabinoids (eCBs), including N-arachidonoylethanolamide (also called anandamide or AEA) and 2-arachidonoylglycerol (2-AG), as well as phytocannabinoids, such as delta(9)-tetrahydrocannabinol (THC). Mediates many cannabinoid-induced effects, acting, among others, on food intake, memory loss, gastrointestinal motility, catalepsy, ambulatory activity, anxiety, chronic pain. Signaling typically involves reduction in cyclic AMP. In the hypothalamus, may have a dual effect on mitochondrial respiration depending upon the agonist dose and possibly upon the cell type. Increases respiration at low doses, while decreases respiration at high doses. At high doses, CNR1 signal transduction involves G-protein alpha-i protein activation and subsequent inhibition of mitochondrial soluble adenylate cyclase, decrease in cyclic AMP concentration, inhibition of protein kinase A (PKA)-dependent phosphorylation of specific subunits of the mitochondrial electron transport system, including NDUFS2. In the hypothalamus, inhibits leptin-induced reactive oxygen species (ROS) formation and mediates cannabinoid-induced increase in SREBF1 and FASN gene expression. In response to cannabinoids, drives the release of orexigenic beta-endorphin, but not that of melanocyte-stimulating hormone alpha/alpha-MSH, from hypothalamic POMC neurons, hence promoting food intake. In the hippocampus, regulates cellular respiration and energy production in response to cannabinoids. Involved in cannabinoid-dependent depolarization-induced suppression of inhibition (DSI), a process in which depolarization of CA1 postsynaptic pyramidal neurons mobilizes eCBs, which retrogradely activate presynaptic CB1 receptors, transiently decreasing GABAergic inhibitory neurotransmission. Also reduces excitatory synaptic transmission. In superior cervical ganglions and cerebral vascular smooth muscle cells, inhibits voltage-gated Ca(2+) channels in a constitutive, as well as agonist-dependent manner. In cerebral vascular smooth muscle cells, cannabinoid-induced inhibition of voltage-gated Ca(2+) channels leads to vasodilation and decreased vascular tone. Induces leptin production in adipocytes and reduces LRP2-mediated leptin clearance in the kidney, hence participating in hyperleptinemia. In adipose tissue, CNR1 signaling leads to increased expression of SREBF1, ACACA and FASN genes. In the liver, activation by endocannabinoids leads to increased de novo lipogenesis and reduced fatty acid catabolism, associated with increased expression of SREBF1/SREBP-1, GCK, ACACA, ACACB and FASN genes. May also affect de novo cholesterol synthesis and HDL-cholesteryl ether uptake. Peripherally modulates energy metabolism. In high carbohydrate diet-induced obesity, may decrease the expression of mitochondrial dihydrolipoyl dehydrogenase/DLD in striated muscles, as well as that of selected glucose/ pyruvate metabolic enzymes, hence affecting energy expenditure through mitochondrial metabolism. In response to cannabinoid anandamide, elicits a pro-inflammatory response in macrophages, which involves NLRP3 inflammasome activation and IL1B and IL18 secretion. In macrophages infiltrating pancreatic islets, this process may participate in the progression of type-2 diabetes and associated loss of pancreatic beta-cells. Functionally, binds both 2-arachidonoylglycerol (2-AG) and anandamide. Its function is as follows. Only binds 2-arachidonoylglycerol (2-AG) with high affinity. Contrary to its effect on isoform 1, 2-AG behaves as an inverse agonist on isoform 2 in assays measuring GTP binding to membranes. In terms of biological role, only binds 2-arachidonoylglycerol (2-AG) with high affinity. Contrary to its effect on isoform 1, 2-AG behaves as an inverse agonist on isoform 3 in assays measuring GTP binding to membranes. The polypeptide is Cannabinoid receptor 1 (CNR1) (Homo sapiens (Human)).